Here is a 179-residue protein sequence, read N- to C-terminus: ADP-ribosylation factor (179 aa).

A lipid anchor (N-myristoyl glycine) is attached at glycine 2. GTP is bound by residues glycine 24–threonine 31, aspartate 67–glutamine 71, and asparagine 126–aspartate 129.

It belongs to the small GTPase superfamily. Arf family.

Its subcellular location is the golgi apparatus. In terms of biological role, GTP-binding protein involved in protein trafficking; may modulate vesicle budding and uncoating within the Golgi apparatus. The sequence is that of ADP-ribosylation factor (ARF1) from Candida albicans (strain SC5314 / ATCC MYA-2876) (Yeast).